A 469-amino-acid polypeptide reads, in one-letter code: Neuraminidase (469 aa).

The Intravirion portion of the chain corresponds to 1–6; it reads MNPNQK. The helical transmembrane segment at 7–27 threads the bilayer; the sequence is IITIGSICMIVGIISLILQIG. Residues 11–33 form an involved in apical transport and lipid raft association region; that stretch reads GSICMIVGIISLILQIGNIISIW. Topologically, residues 28–469 are virion surface; sequence NIISIWVSHS…GAELPFTIDK (442 aa). The segment at 36 to 90 is hypervariable stalk region; sequence HSIQTGNQNQPEICNQSIITYENNTWVNQTYVNISNTNFVTEQALAPVALAGNSS. Asparagine 50, asparagine 58, asparagine 63, asparagine 68, and asparagine 88 each carry an N-linked (GlcNAc...) asparagine; by host glycan. The interval 91 to 469 is head of neuraminidase; that stretch reads LCPISGWAIY…GAELPFTIDK (379 aa). 8 disulfide bridges follow: cysteine 92–cysteine 417, cysteine 124–cysteine 129, cysteine 184–cysteine 231, cysteine 233–cysteine 238, cysteine 279–cysteine 292, cysteine 281–cysteine 290, cysteine 318–cysteine 335, and cysteine 421–cysteine 446. Arginine 118 contributes to the substrate binding site. A glycan (N-linked (GlcNAc...) asparagine; by host) is linked at asparagine 146. The Proton donor/acceptor role is filled by aspartate 151. Arginine 152 lines the substrate pocket. A glycan (N-linked (GlcNAc...) asparagine; by host) is linked at asparagine 235. 277-278 lines the substrate pocket; sequence EE. Arginine 293 serves as a coordination point for substrate. Ca(2+) is bound by residues aspartate 294, glycine 298, and aspartate 324. Residue arginine 368 coordinates substrate. Tyrosine 402 functions as the Nucleophile in the catalytic mechanism.

Belongs to the glycosyl hydrolase 34 family. Homotetramer. Requires Ca(2+) as cofactor. N-glycosylated.

It is found in the virion membrane. Its subcellular location is the host apical cell membrane. It carries out the reaction Hydrolysis of alpha-(2-&gt;3)-, alpha-(2-&gt;6)-, alpha-(2-&gt;8)- glycosidic linkages of terminal sialic acid residues in oligosaccharides, glycoproteins, glycolipids, colominic acid and synthetic substrates.. Its activity is regulated as follows. Inhibited by the neuraminidase inhibitors zanamivir (Relenza) and oseltamivir (Tamiflu). These drugs interfere with the release of progeny virus from infected cells and are effective against all influenza strains. Resistance to neuraminidase inhibitors is quite rare. Its function is as follows. Catalyzes the removal of terminal sialic acid residues from viral and cellular glycoconjugates. Cleaves off the terminal sialic acids on the glycosylated HA during virus budding to facilitate virus release. Additionally helps virus spread through the circulation by further removing sialic acids from the cell surface. These cleavages prevent self-aggregation and ensure the efficient spread of the progeny virus from cell to cell. Otherwise, infection would be limited to one round of replication. Described as a receptor-destroying enzyme because it cleaves a terminal sialic acid from the cellular receptors. May facilitate viral invasion of the upper airways by cleaving the sialic acid moieties on the mucin of the airway epithelial cells. Likely to plays a role in the budding process through its association with lipid rafts during intracellular transport. May additionally display a raft-association independent effect on budding. Plays a role in the determination of host range restriction on replication and virulence. Sialidase activity in late endosome/lysosome traffic seems to enhance virus replication. The chain is Neuraminidase from Influenza A virus (strain A/Chicken/Scotland/1959 H5N1).